The primary structure comprises 94 residues: Small ribosomal subunit protein bS20 (94 aa).

Belongs to the bacterial ribosomal protein bS20 family.

Its function is as follows. Binds directly to 16S ribosomal RNA. The protein is Small ribosomal subunit protein bS20 of Acaryochloris marina (strain MBIC 11017).